Here is a 243-residue protein sequence, read N- to C-terminus: Nuclear ubiquitous casein and cyclin-dependent kinase substrate 1 (243 aa).

A disordered region spans residues 1–243; sequence MSRPVRNRKV…SEDDAQSGED (243 aa). Residue Y13 is modified to Phosphotyrosine. Phosphoserine occurs at positions 14 and 19. Y26 bears the Phosphotyrosine mark. Positions 35–51 are enriched in basic residues; sequence KKIRSSPREAKNKRRSG. Residues S54, S58, S61, S73, S75, and S79 each carry the phosphoserine modification. Over residues 64 to 77 the composition is skewed to basic and acidic residues; the sequence is KDVKTKKDDSHSAE. A compositionally biased stretch (low complexity) spans 91–100; the sequence is QQRQAASKAA. Residues 111-124 show a composition bias toward acidic residues; it reads VGSEEEQEEEDEAP. A phosphoserine mark is found at S113, S130, S132, and S144. Residues 132–145 are compositionally biased toward acidic residues; the sequence is SDEDFLVEDDDDSD. Basic residues predominate over residues 149–174; the sequence is SKKKNKKMVKKSKPERKEKKMPKPRL. Position 179 is a phosphothreonine (T179). S181 is subject to Phosphoserine. Positions 197 to 206 are enriched in basic and acidic residues; it reads ASKEKTPSPK. T202 carries the phosphothreonine modification. Residues S204, S214, S223, S229, S234, and S240 each carry the phosphoserine modification. The segment covering 232–243 has biased composition (acidic residues); the sequence is EGSEDDAQSGED.

In terms of assembly, does not interact with RAD51. In terms of processing, phosphorylated in an ATM-dependent manner in response to DNA damage. Phosphorylated by CDK1 and casein kinase.

Its subcellular location is the nucleus. It is found in the chromosome. Chromatin-associated protein involved in DNA repair by promoting homologous recombination (HR). Binds double-stranded DNA (dsDNA) and secondary DNA structures, such as D-loop structures, but with less affinity than RAD51AP1. The polypeptide is Nuclear ubiquitous casein and cyclin-dependent kinase substrate 1 (NUCKS1) (Bos taurus (Bovine)).